The sequence spans 357 residues: 3-isopropylmalate dehydrogenase (357 aa).

76 to 89 (GPQWDTIDPALRPE) contributes to the NAD(+) binding site. The substrate site is built by R96, R106, R134, and D224. Mg(2+) contacts are provided by D224, D248, and D252. 282 to 294 (GSAPDIAGQGVAN) lines the NAD(+) pocket.

It belongs to the isocitrate and isopropylmalate dehydrogenases family. LeuB type 1 subfamily. As to quaternary structure, homodimer. It depends on Mg(2+) as a cofactor. Requires Mn(2+) as cofactor.

The protein resides in the cytoplasm. It catalyses the reaction (2R,3S)-3-isopropylmalate + NAD(+) = 4-methyl-2-oxopentanoate + CO2 + NADH. The protein operates within amino-acid biosynthesis; L-leucine biosynthesis; L-leucine from 3-methyl-2-oxobutanoate: step 3/4. Functionally, catalyzes the oxidation of 3-carboxy-2-hydroxy-4-methylpentanoate (3-isopropylmalate) to 3-carboxy-4-methyl-2-oxopentanoate. The product decarboxylates to 4-methyl-2 oxopentanoate. This Xylella fastidiosa (strain 9a5c) protein is 3-isopropylmalate dehydrogenase.